Reading from the N-terminus, the 945-residue chain is Soluble guanylate cyclase gcy-33 (945 aa).

Position 104 (His104) interacts with heme. The stretch at 388–413 forms a coiled coil; sequence SEVLTEMTREISEAKKTARTLLTQMM. Residues 437 to 567 enclose the Guanylate cyclase domain; it reads SIGFIRVCDF…DTVNTASRME (131 aa). Disordered stretches follow at residues 639-679 and 706-930; these read KEAE…LSGS and QDEN…KCED. The segment covering 661–679 has biased composition (low complexity); that stretch reads SLGESIDSSSSRRGSLSGS. Residues 711–720 are compositionally biased toward polar residues; that stretch reads RPPTWSASHS. Basic and acidic residues predominate over residues 721–731; that stretch reads QDIRKPRKTES. Positions 732 to 744 are enriched in polar residues; the sequence is KITLNSRLSSSDL. Composition is skewed to basic and acidic residues over residues 750 to 759 and 766 to 804; these read ETSKDSDGET and ELKEVNRIREEALAQEKEEERTTKEENQKIEEVGEDHVS. Residues 763 to 802 adopt a coiled-coil conformation; sequence TSSELKEVNRIREEALAQEKEEERTTKEENQKIEEVGEDH. The span at 817–828 shows a compositional bias: polar residues; it reads GDNNISFSQMPS. The segment covering 851–861 has biased composition (basic and acidic residues); sequence ISKKKLEKEDS. The segment covering 862-884 has biased composition (polar residues); it reads NSSMSSLDERTTVSAKPTTTRRL. The span at 886–896 shows a compositional bias: basic and acidic residues; it reads NQKDLEKEKKR. Positions 898–911 are enriched in low complexity; it reads SMAGSSVTSSSAHS. Residues 916 to 930 are compositionally biased toward basic and acidic residues; it reads SKKDTRDKSRCKCED.

The protein belongs to the adenylyl cyclase class-4/guanylyl cyclase family. In terms of assembly, heterodimer; with other soluble guanylate cyclases. Heme serves as cofactor. Expressed in BAG sensory neuron.

The protein localises to the cytoplasm. The enzyme catalyses GTP = 3',5'-cyclic GMP + diphosphate. Its activity is regulated as follows. May be regulated by molecular oxygen. Probably not activated by nitric oxide (NO). In terms of biological role, synthesizes cyclic GMP (cGMP) from GTP. May be involved in sensitivity to quinine by regulating egl-4 activity through the production of cGMP. In Caenorhabditis elegans, this protein is Soluble guanylate cyclase gcy-33 (gcy-33).